We begin with the raw amino-acid sequence, 466 residues long: Phytase A (466 aa).

Residues 1–19 form the signal peptide; that stretch reads MAVLSVLLPITFLLSSVTG. Cysteine 30 and cysteine 39 are oxidised to a cystine. 6 residues coordinate 1D-myo-inositol hexakisphosphate: glutamine 49, tyrosine 50, arginine 80, histidine 81, arginine 84, and threonine 87. 4 disulfides stabilise this stretch: cysteine 70–cysteine 413, cysteine 214–cysteine 464, cysteine 263–cysteine 281, and cysteine 435–cysteine 443. Histidine 81 acts as the Nucleophile in catalysis. N-linked (GlcNAc...) asparagine glycosylation is found at asparagine 104 and asparagine 119. Arginine 164 is a binding site for 1D-myo-inositol hexakisphosphate. N-linked (GlcNAc...) asparagine glycosylation is found at asparagine 206 and asparagine 219. Lysine 300 is a 1D-myo-inositol hexakisphosphate binding site. 2 N-linked (GlcNAc...) asparagine glycosylation sites follow: asparagine 338 and asparagine 351. Histidine 360 and aspartate 361 together coordinate 1D-myo-inositol hexakisphosphate. The N-linked (GlcNAc...) asparagine glycan is linked to asparagine 375.

It belongs to the histidine acid phosphatase family. Monomer.

The protein resides in the secreted. The enzyme catalyses 1D-myo-inositol hexakisphosphate + H2O = 1D-myo-inositol 1,2,4,5,6-pentakisphosphate + phosphate. It catalyses the reaction 1D-myo-inositol 1,2,4,5,6-pentakisphosphate + H2O = 1D-myo-inositol 1,2,5,6-tetrakisphosphate + phosphate. The catalysed reaction is 1D-myo-inositol 1,2,5,6-tetrakisphosphate + H2O = 1D-myo-inositol 1,2,6-trisphosphate + phosphate. It carries out the reaction 1D-myo-inositol 1,2,6-trisphosphate + H2O = 1D-myo-inositol 1,2-bisphosphate + phosphate. The enzyme catalyses 1D-myo-inositol 1,2-bisphosphate + H2O = 1D-myo-inositol 2-phosphate + phosphate. Catalyzes the phosphate monoester hydrolysis of phytic acid (myo-inositol hexakisphosphate), which results in the stepwise formation of myo-inositol pentakis-, tetrakis-, tris-, bis-, and monophosphates, as well as the liberation of inorganic phosphate. Myo-inositol 2-monophosphate is the end product. This is Phytase A (phyA) from Aspergillus oryzae (strain ATCC 42149 / RIB 40) (Yellow koji mold).